The sequence spans 466 residues: Arginine biosynthesis bifunctional protein ArgJ, mitochondrial (466 aa).

The substrate site is built by Thr-194, Lys-223, Thr-234, Glu-321, Asn-461, and Thr-466. Thr-234 functions as the Nucleophile in the catalytic mechanism.

It belongs to the ArgJ family. Heterodimer of an alpha and a beta chain. The alpha and beta chains are autoproteolytically processed from a single precursor protein within the mitochondrion.

It localises to the mitochondrion matrix. It catalyses the reaction N(2)-acetyl-L-ornithine + L-glutamate = N-acetyl-L-glutamate + L-ornithine. The catalysed reaction is L-glutamate + acetyl-CoA = N-acetyl-L-glutamate + CoA + H(+). It participates in amino-acid biosynthesis; L-arginine biosynthesis; L-ornithine and N-acetyl-L-glutamate from L-glutamate and N(2)-acetyl-L-ornithine (cyclic): step 1/1. Its pathway is amino-acid biosynthesis; L-arginine biosynthesis; N(2)-acetyl-L-ornithine from L-glutamate: step 1/4. In terms of biological role, catalyzes two activities which are involved in the cyclic version of arginine biosynthesis: the synthesis of acetylglutamate from glutamate and acetyl-CoA, and of ornithine by transacetylation between acetylornithine and glutamate. The chain is Arginine biosynthesis bifunctional protein ArgJ, mitochondrial from Aspergillus fumigatus (strain ATCC MYA-4609 / CBS 101355 / FGSC A1100 / Af293) (Neosartorya fumigata).